Reading from the N-terminus, the 1442-residue chain is Protein patched homolog 1 (1442 aa).

The interval 1–45 (MASAADALEPESGSSTAGGGSHPVRAARSARGRRRRSGGTRRAAA) is disordered. The Cytoplasmic portion of the chain corresponds to 1-101 (MASAADALEP…GCYIQKNCGK (101 aa)). Positions 28 to 39 (RSARGRRRRSGG) are enriched in basic residues. Residues 102-122 (FLVVGLLYSAFAVGLRAANLE) form a helical membrane-spanning segment. Residues 123–436 (TNVEELWVEV…LDDILKSFSD (314 aa)) are Extracellular-facing. N-linked (GlcNAc...) asparagine glycosylation is found at N141, N312, N349, and N414. A helical membrane pass occupies residues 437–457 (VSVIRVASGYLLMLAYACLTM). Positions 438 to 598 (SVIRVASGYL…LLIFPAILSM (161 aa)) constitute an SSD domain. Topologically, residues 458–472 (LRWDCAKSQGAVGLA) are cytoplasmic. Residues 473–493 (GVLLVALSVAAGLGLCSLIGI) form a helical membrane-spanning segment. The Extracellular segment spans residues 494–501 (SFNAATTQ). A helical transmembrane segment spans residues 502 to 522 (VLPFLALGVGVDDVFLLAHAF). The Cytoplasmic segment spans residues 523-547 (SETGQNKRIPFEDRTGECLKRTGAS). The helical transmembrane segment at 548–568 (VALTSISNVTAFFMAALIPIP) threads the bilayer. The Extracellular segment spans residues 569–577 (ALRAFSLQA). A helical transmembrane segment spans residues 578 to 598 (AVVVVFNFAMVLLIFPAILSM). The Cytoplasmic segment spans residues 599 to 747 (DLYRREDRRL…HYAPFLLKPK (149 aa)). Residues 748-768 (AKVVVIFLFLGLLGLSLYGTT) form a helical membrane-spanning segment. The Extracellular segment spans residues 769–1026 (RVRDGLDLTD…WEQYIGLRHW (258 aa)). Residues N827, N874, and N999 are each glycosylated (N-linked (GlcNAc...) asparagine). A helical membrane pass occupies residues 1027–1047 (LLLSISVVLACTFLVCALFLL). The Cytoplasmic portion of the chain corresponds to 1048 to 1053 (NPWTAG). The helical transmembrane segment at 1054 to 1074 (IIVVVLALMTVELFGMMGLIG) threads the bilayer. The Extracellular segment spans residues 1075 to 1082 (IKLSAVPV). A helical transmembrane segment spans residues 1083-1101 (VILIASVGIGVEFTVHIAL). Residues 1102–1120 (AFLTAIGDKNRRAVLALEH) are Cytoplasmic-facing. A helical transmembrane segment spans residues 1121-1141 (MFAPVLDGAVSTLLGVLMLAG). Over 1142–1153 (SEFDFIVRYFFA) the chain is Extracellular. The helical transmembrane segment at 1154–1174 (VLAILTILGVLNGLVLLPVLL) threads the bilayer. Topologically, residues 1175–1442 (SFFGPYPEVS…EERTAGKISE (268 aa)) are cytoplasmic. 2 disordered regions span residues 1188–1231 (GRNR…TTVS) and 1266–1338 (STVV…LNHK). Positions 1217–1226 (SDSSDSEYSS) are enriched in low complexity. A compositionally biased stretch (polar residues) spans 1276–1293 (QSSPRLQSNPEAGTQQVW).

It belongs to the patched family. Glycosylation is necessary for SHH binding. In terms of tissue distribution, expression is seen in the embryonic neural tube, sclerotome, visceral mesoderm, and limb bud.

The protein resides in the membrane. Acts as a receptor for sonic hedgehog (SHH), indian hedgehog (IHH) and desert hedgehog (DHH). Associates with the smoothened protein (SMO) to transduce the hedgehog's proteins signal. This Gallus gallus (Chicken) protein is Protein patched homolog 1 (PTCH1).